The sequence spans 370 residues: Alpha-ketoglutarate-dependent xanthine dioxygenase xanA (370 aa).

His107 contributes to the substrate binding site. The Fe cation site is built by His149 and Asp151. Residues Thr195 and Trp325 each coordinate 2-oxoglutarate. His340 serves as a coordination point for Fe cation. Position 352 (Arg352) interacts with 2-oxoglutarate.

The protein belongs to the TfdA dioxygenase family. The cofactor is Fe(2+). Glycosylated. Is subject to both N- and O-linked glycosylation. Post-translationally, phosphorylated.

The protein resides in the cytoplasm. It localises to the cytosol. The enzyme catalyses xanthine + 2-oxoglutarate + O2 = urate + succinate + CO2. With respect to regulation, cu(2+) and Zn(2+) completely inhibit the xanthine dioxygenase activity, whereas Co(2+), Mn(2+), and Ni(2+) partially inhibit the activity. The inactive metal ions are presumed to compete for the Fe(2+)-binding site. N-oxalylglycine (NOG), a known inhibitor of several Fe(2+)/alpha-ketoglutarate-dependent dioxygenase family members, competes with alpha-ketoglutarate and provides a Ki of 0.12 uM for inhibition. 6,8-dihydroxypurine acts as a slow-binding competitive inhibitor. The thiol-specific inhibitors 5,5'-dithiobis(2-nitrobenzoic acid) (DTNB) and iodoacetamide, inhibit also the catalytic activity. Its function is as follows. Alpha-ketoglutarate-dependent xanthine dioxygenase is a non-heme mononuclear Fe(2+) enzyme that decarboxylates alpha-ketoglutarate to succinate and CO(2) while hydroxylating xanthine to generate uric acid. Allows xanthine utilization as a nitrogen source. Whereas xanA is highly specific for xanthine, alpha-ketoadipic acid can replace alpha-ketoglutarate as a cosubstrate. Exhibits ferroxidase activity in the absence of substrates. In Emericella nidulans (Aspergillus nidulans), this protein is Alpha-ketoglutarate-dependent xanthine dioxygenase xanA.